The chain runs to 150 residues: Large ribosomal subunit protein uL15 (150 aa).

Positions 1 to 57 are disordered; the sequence is MTIKLESLQSNKGSRRKKMRKGRGIAAGQGASCGFGMRGQKSRSGRPTRPGFEGGQM. The span at 13–23 shows a compositional bias: basic residues; it reads GSRRKKMRKGR. Residues 25–37 are compositionally biased toward gly residues; the sequence is IAAGQGASCGFGM.

The protein belongs to the universal ribosomal protein uL15 family. In terms of assembly, part of the 50S ribosomal subunit.

Its function is as follows. Binds to the 23S rRNA. In Prochlorococcus marinus (strain NATL1A), this protein is Large ribosomal subunit protein uL15.